Reading from the N-terminus, the 145-residue chain is Probable inactive ribonuclease-like protein 12 (145 aa).

A signal peptide spans Met1–Thr19.

Belongs to the pancreatic ribonuclease family.

Its subcellular location is the secreted. Functionally, does not exhibit any ribonuclease activity. This chain is Probable inactive ribonuclease-like protein 12 (Rnase12), found in Mus musculus (Mouse).